The primary structure comprises 80 residues: Defensin-like protein 18 (80 aa).

A signal peptide spans 1 to 29 (MAKFCTTITLILVALVLFADFEAPTIVKA). 4 disulfides stabilise this stretch: Cys-32–Cys-80, Cys-43–Cys-64, Cys-49–Cys-74, and Cys-53–Cys-76.

This sequence belongs to the DEFL family.

It localises to the secreted. Confers broad-spectrum resistance to pathogens. The polypeptide is Defensin-like protein 18 (PDF1.5) (Arabidopsis thaliana (Mouse-ear cress)).